The chain runs to 529 residues: Sodium/hydrogen exchanger 4 (529 aa).

The Cytoplasmic portion of the chain corresponds to 1 to 19 (MSIGLTEFVTNKLAAEHPQ). A helical membrane pass occupies residues 20–40 (VIPISVFIAILCLCLVIGHLL). At 41–45 (EENRW) the chain is on the vacuolar side. The helical transmembrane segment at 46–66 (VNESITAILVGAASGTVILLI) threads the bilayer. Topologically, residues 67 to 73 (SKGKSSH) are cytoplasmic. An intramembrane region (helical) is located at residues 74 to 94 (ILVFDEELFFIYLLPPIIFNA). Residues 95–112 (GFQVKKKKFFHNFLTIMS) lie on the Cytoplasmic side of the membrane. A helical transmembrane segment spans residues 113-133 (FGVIGVFISTVIISFGTWWLF). The Vacuolar segment spans residues 134–171 (PKLGFKGLSARDYLAIGTIFSSTDTVCTLQILHQDETP). Residues 172–192 (LLYSLVFGEGVVNDATSVVLF) form a helical membrane-spanning segment. Topologically, residues 193-214 (NAVQKIQFESLTGWTALQVFGN) are cytoplasmic. A helical membrane pass occupies residues 215–235 (FLYLFSTSTLLGIGVGLITSF). The Vacuolar segment spans residues 236 to 250 (VLKTLYFGRHSTTRE). A helical transmembrane segment spans residues 251-267 (LAIMVLMAYLSYMLAEL). Topologically, residues 268–273 (FSLSGI) are cytoplasmic. The chain crosses the membrane as a helical span at residues 274-291 (LTVFFCGVLMSHYASYNV). At 292 to 301 (TESSRITSRH) the chain is on the vacuolar side. The helical transmembrane segment at 302-322 (VFAMLSFIAETFIFLYVGTDA) threads the bilayer. The Cytoplasmic segment spans residues 323-342 (LDFTKWKTSSLSFGGTLGVS). A helical transmembrane segment spans residues 343–363 (GVITALVLLGRAAFVFPLSVL). Residues 364-380 (TNFMNRHTERNESITFK) lie on the Vacuolar side of the membrane. N-linked (GlcNAc...) asparagine glycosylation is present at Asn374. Residues 381-401 (HQVIIWWAGLMRGAVSIALAF) traverse the membrane as a helical segment. Topologically, residues 402-415 (KQFTYSGVTLDPVN) are cytoplasmic. Residues 416–436 (AAMVTNTTIVVLFTTLVFGFL) form a helical membrane-spanning segment. At 437 to 529 (TKPLVNYLLP…GPRRENQPEC (93 aa)) the chain is on the vacuolar side.

Belongs to the monovalent cation:proton antiporter 1 (CPA1) transporter (TC 2.A.36) family. As to expression, expressed at very low levels in roots and shoots.

The protein resides in the vacuole membrane. The enzyme catalyses Na(+)(in) + H(+)(out) = Na(+)(out) + H(+)(in). It catalyses the reaction K(+)(in) + H(+)(out) = K(+)(out) + H(+)(in). May act in low affinity electroneutral exchange of protons for cations such as Na(+) or K(+) across membranes. May also exchange Li(+) and Cs(+) with a lower affinity. This Arabidopsis thaliana (Mouse-ear cress) protein is Sodium/hydrogen exchanger 4 (NHX4).